Reading from the N-terminus, the 93-residue chain is Small ribosomal subunit protein bS6 (93 aa).

Belongs to the bacterial ribosomal protein bS6 family.

In terms of biological role, binds together with bS18 to 16S ribosomal RNA. This chain is Small ribosomal subunit protein bS6, found in Phytoplasma australiense.